The sequence spans 317 residues: Methionyl-tRNA formyltransferase (317 aa).

110-113 (SLLP) is a binding site for (6S)-5,6,7,8-tetrahydrofolate. The disordered stretch occupies residues 292–317 (RMKGEDFVRGKNVQPGDVLGEANEEN).

It belongs to the Fmt family.

It carries out the reaction L-methionyl-tRNA(fMet) + (6R)-10-formyltetrahydrofolate = N-formyl-L-methionyl-tRNA(fMet) + (6S)-5,6,7,8-tetrahydrofolate + H(+). Its function is as follows. Attaches a formyl group to the free amino group of methionyl-tRNA(fMet). The formyl group appears to play a dual role in the initiator identity of N-formylmethionyl-tRNA by promoting its recognition by IF2 and preventing the misappropriation of this tRNA by the elongation apparatus. The sequence is that of Methionyl-tRNA formyltransferase from Bacillus velezensis (strain DSM 23117 / BGSC 10A6 / LMG 26770 / FZB42) (Bacillus amyloliquefaciens subsp. plantarum).